The primary structure comprises 276 residues: Undecaprenyl-diphosphatase (276 aa).

The next 6 membrane-spanning stretches (helical) occupy residues 43 to 63 (RAMA…VWEF), 85 to 105 (INLL…ADLI), 109 to 129 (LFNP…MLWA), 184 to 204 (ATEF…VYSG), 218 to 238 (VFAI…KGLL), and 254 to 274 (IAFG…WTAA).

Belongs to the UppP family.

Its subcellular location is the cell inner membrane. It carries out the reaction di-trans,octa-cis-undecaprenyl diphosphate + H2O = di-trans,octa-cis-undecaprenyl phosphate + phosphate + H(+). Catalyzes the dephosphorylation of undecaprenyl diphosphate (UPP). Confers resistance to bacitracin. The chain is Undecaprenyl-diphosphatase from Pseudomonas fluorescens (strain ATCC BAA-477 / NRRL B-23932 / Pf-5).